The primary structure comprises 201 residues: Holliday junction resolvase RecU (201 aa).

Residues Thr85, Asp87, Glu100, and Gln119 each contribute to the Mg(2+) site.

It belongs to the RecU family. Mg(2+) is required as a cofactor.

The protein localises to the cytoplasm. It catalyses the reaction Endonucleolytic cleavage at a junction such as a reciprocal single-stranded crossover between two homologous DNA duplexes (Holliday junction).. In terms of biological role, endonuclease that resolves Holliday junction intermediates in genetic recombination. Cleaves mobile four-strand junctions by introducing symmetrical nicks in paired strands. Promotes annealing of linear ssDNA with homologous dsDNA. Required for DNA repair, homologous recombination and chromosome segregation. The sequence is that of Holliday junction resolvase RecU from Geobacillus sp. (strain WCH70).